A 423-amino-acid chain; its full sequence is Pleckstrin homology domain-containing family O member 1 (423 aa).

3 disordered regions span residues 1–21 (MEKN…SAQP), 81–100 (RKSK…AHSR), and 217–277 (LAAG…HSEK). Over residues 7 to 20 (AKRGQQDGNQQSAQ) the composition is skewed to polar residues. The 112-residue stretch at 20 to 131 (QPEKVGWVRK…WINALNSAIT (112 aa)) folds into the PH domain. Basic residues predominate over residues 83 to 92 (SKSRSKKNHS). Basic and acidic residues predominate over residues 222–259 (RRSDSENVKLSEKGRSGTLPRHEVTSWDKPTQRKDSLD).

C-terminal fragments could be released during apoptosis via caspase-3-dependent cleavage.

The protein localises to the membrane. It is found in the nucleus. The protein resides in the cytoplasm. Functionally, plays a role in the regulation of the actin cytoskeleton through its interactions with actin capping protein (CP). This chain is Pleckstrin homology domain-containing family O member 1 (PLEKHO1), found in Gallus gallus (Chicken).